The sequence spans 330 residues: Probable L-lactate dehydrogenase (330 aa).

Residues arginine 105, asparagine 137, and arginine 168 each contribute to the substrate site. Residue asparagine 137 coordinates NAD(+). The active-site Proton acceptor is histidine 192.

This sequence belongs to the LDH/MDH superfamily. LDH family. As to quaternary structure, homotetramer.

Its subcellular location is the cytoplasm. The enzyme catalyses (S)-lactate + NAD(+) = pyruvate + NADH + H(+). The protein operates within fermentation; pyruvate fermentation to lactate; (S)-lactate from pyruvate: step 1/1. The protein is Probable L-lactate dehydrogenase of Schizosaccharomyces pombe (strain 972 / ATCC 24843) (Fission yeast).